The primary structure comprises 266 residues: Secreted RxLR effector protein 128 (266 aa).

An N-terminal signal peptide occupies residues 1–18 (MRGAFYTAIALLIGRSQT). A RxLR-dEER motif is present at residues 48-63 (RYLRDGLAHSATNEER).

The protein belongs to the RxLR effector family.

It is found in the secreted. The protein resides in the host nucleus. Functionally, secreted effector that dos not suppress the host cell death induced by cell death-inducing proteins. The polypeptide is Secreted RxLR effector protein 128 (Plasmopara viticola (Downy mildew of grapevine)).